Here is a 326-residue protein sequence, read N- to C-terminus: Guanine nucleotide-binding protein subunit beta-like protein 1 (326 aa).

WD repeat units follow at residues 17-61 (GTQS…IVTT), 64-104 (GHGG…NTIM), 159-202 (ARPG…VCSQ), 205-244 (CHEE…SLQV), 250-291 (LTNP…AVLA), and 292-325 (FHSA…LYPC).

In terms of tissue distribution, expressed at low levels in most tissues and highly expressed in adult testis. Widely expressed in adult brain with striking regional distribution in forebrain, midbrain, and hindbrain structures, including the thalamus, hypothalamus, amygdala, hippocampus, pons.

It is found in the cytoplasm. It localises to the nucleus. In terms of biological role, acts as a critical regulator of DNA damage response (DDR) signaling via specifically regulating phosphatidylinositol 3-kinase-related protein kinase (PIKK) family proteins. In Mus musculus (Mouse), this protein is Guanine nucleotide-binding protein subunit beta-like protein 1 (Gnb1l).